The following is a 1079-amino-acid chain: MEDEAVLDRGASFLKHVCDEEEVEGHHTIYIGVHVPKSYRRRRRHKRKAGHKEKKEKERISENYSDKSDVENADESSSSILKPLISPAAERIRFILGEEDDSPAPPQLFTELDELLAVDGQEMEWKETARWIKFEEKVEQGGERWSKPHVATLSLHSLFELRTCMEKGSIMLDREASSLPQLVEMIADHQIETGLLKPDLKDKVTYTLLRKHRHQTKKSNLRSLADIGKTVSSASRMFSNPDNGSPAMTHRNLTSSSLNDISDKPEKDQLKNKFMKKLPRDAEASNVLVGEVDFLDTPFIAFVRLQQAVMLGALTEVPVPTRFLFILLGPKGKAKSYHEIGRAIATLMSDEVFHDIAYKAKDRHDLIAGIDEFLDEVIVLPPGEWDPTIRIEPPKSLPSSDKRKNMYSGGENVQMNGDTPHDGGHGGGGHGDCEELQRTGRFCGGLIKDIKRKAPFFASDFYDALNIQALSAILFIYLATVTNAITFGGLLGDATDNMQGVLESFLGTAVSGAIFCLFAGQPLTILSSTGPVLVFERLLFNFSKDHNFDYLEFRLWIGLWSAFMCLVLVATDASFLVQYFTRFTEEGFSSLISFIFIYDAFKKMIKLADYYPINSDFKVGYNTHFSCACLPPDPVNLSVSNDTTLAPEDLPTISSTDMYHNVTFDWAYLSKKECVKYGGKLVGNNCDFVPDITLMSFILFLGTYTSSMAMKKFKTSRYFPTTARKLISDFAIILSILIFCVIDALVGVDTPKLIVPSEFKPTSPNRGWFVPPFGGNPWWVCLAAAIPALLVTILIFMDQQITAVIVNRKEHKLKKGAGYHLDLFWVAILMVVCSFMALPWYVAATVISIAHIDSLKMETETSAPGEQPKFLGVREQRVTGTLVFILTGLSVFMAPILKFIPMPVLYGVFLYMGVASLNGVQFMDRLKLLLMPLKHQPDFIYLRHVPLRRVHLFTFLQVLCLALLWILKSTVAAIIFPVMILALVAVRKGMDYLFSQHDLSFLDDVIPEKDKKKKEDEKKKKKKKGSLDSDNDDSDCPYSEKVPSIKIPMDIMEQQPFLSDNKPLDRERSSTFLERHTSC.

The interval 1 to 62 (MEDEAVLDRG…EKKEKERISE (62 aa)) is required for interaction with AHCYL1. Topologically, residues 1 to 466 (MEDEAVLDRG…FASDFYDALN (466 aa)) are cytoplasmic. At glutamate 21 the chain carries Phosphoserine. Tyrosine 30 is modified (phosphotyrosine). Basic residues predominate over residues 39–52 (YRRRRRHKRKAGHK). The tract at residues 39–78 (YRRRRRHKRKAGHKEKKEKERISENYSDKSDVENADESSS) is disordered. Positions 53–70 (EKKEKERISENYSDKSDV) are enriched in basic and acidic residues. Residues serine 61, serine 65, serine 68, serine 223, serine 232, serine 233, and serine 245 each carry the phosphoserine modification. The segment at 235 to 266 (SRMFSNPDNGSPAMTHRNLTSSSLNDISDKPE) is disordered. 2 positions are modified to phosphothreonine: threonine 249 and threonine 254. Residues 251–260 (RNLTSSSLND) show a composition bias toward polar residues. A phosphoserine mark is found at serine 256, serine 257, and serine 262. The chain crosses the membrane as a helical span at residues 467 to 491 (IQALSAILFIYLATVTNAITFGGLL). Residues 492-501 (GDATDNMQGV) are Extracellular-facing. Residues 502-520 (LESFLGTAVSGAIFCLFAG) traverse the membrane as a helical segment. Position 521 (glutamine 521) is a topological domain, cytoplasmic. The discontinuously helical transmembrane segment at 522 to 542 (PLTILSSTGPVLVFERLLFNF) threads the bilayer. At 543–550 (SKDHNFDY) the chain is on the extracellular side. Residues 551 to 571 (LEFRLWIGLWSAFMCLVLVAT) traverse the membrane as a helical segment. The Cytoplasmic segment spans residues 572 to 585 (DASFLVQYFTRFTE). The helical transmembrane segment at 586 to 609 (EGFSSLISFIFIYDAFKKMIKLAD) threads the bilayer. Topologically, residues 610-692 (YYPINSDFKV…GNNCDFVPDI (83 aa)) are extracellular. Residues 693–710 (TLMSFILFLGTYTSSMAM) traverse the membrane as a helical segment. Residues 711–725 (KKFKTSRYFPTTARK) lie on the Cytoplasmic side of the membrane. A helical membrane pass occupies residues 726–745 (LISDFAIILSILIFCVIDAL). Topologically, residues 746-779 (VGVDTPKLIVPSEFKPTSPNRGWFVPPFGGNPWW) are extracellular. Positions 748–779 (VDTPKLIVPSEFKPTSPNRGWFVPPFGGNPWW) are interaction with CA4. A helical transmembrane segment spans residues 780 to 807 (VCLAAAIPALLVTILIFMDQQITAVIVN). The Cytoplasmic segment spans residues 808–819 (RKEHKLKKGAGY). The helical transmembrane segment at 820–836 (HLDLFWVAILMVVCSFM) threads the bilayer. Position 837 (alanine 837) is a topological domain, extracellular. The discontinuously helical transmembrane segment at 838–855 (LPWYVAATVISIAHIDSL) threads the bilayer. Over 856–877 (KMETETSAPGEQPKFLGVREQR) the chain is Cytoplasmic. A helical transmembrane segment spans residues 878-894 (VTGTLVFILTGLSVFMA). At 895–901 (PILKFIP) the chain is on the extracellular side. The chain crosses the membrane as a helical span at residues 902–918 (MPVLYGVFLYMGVASLN). At 919–960 (GVQFMDRLKLLLMPLKHQPDFIYLRHVPLRRVHLFTFLQVLC) the chain is on the cytoplasmic side. The segment at residues 961–986 (LALLWILKSTVAAIIFPVMILALVAV) is an intramembrane region (discontinuously helical). Residues 987–1079 (RKGMDYLFSQ…STFLERHTSC (93 aa)) lie on the Cytoplasmic side of the membrane. A CA2-binding region spans residues 1002–1004 (LDD). A disordered region spans residues 1012-1079 (KKKEDEKKKK…STFLERHTSC (68 aa)). 2 positions are modified to phosphoserine: serine 1026 and serine 1029. The CA2-binding stretch occupies residues 1030–1033 (DNDD). Phosphoserine occurs at positions 1034 and 1044. The interval 1057–1059 (FLS) is required for basolateral targeting. Positions 1062 to 1079 (KPLDRERSSTFLERHTSC) are enriched in basic and acidic residues. Serine 1069 carries the phosphoserine modification.

It belongs to the anion exchanger (TC 2.A.31) family. Homodimer. Interacts with CA2/carbonic anhydrase 2 and CA4/carbonic anhydrase 4 which may regulate transporter activity. Isoform 1 but not isoform 2 interacts with AHCYL1 (via PEST domain when phosphorylated); the interaction increases SLC4A4 isoform 1 activity. Interacts with AHCYL2. Post-translationally, phosphorylation of Ser-1026 by PKA increases the binding of CA2 and changes the Na(+):HCO3(-) stoichiometry of the transporter from 3:1 to 2:1. Phosphorylated in presence of STK39 and dephosphorylated in presence of PP1 phosphatase; phosphorylation seems to inhibit SLC4A4 activity. N-glycosylated. May not be necessary for the transporter basic functions. As to expression, isoform 1 is specifically expressed in pancreatic ducts and acini. Also expressed in parotid acinar cells and in the colonic crypts.

Its subcellular location is the basolateral cell membrane. It is found in the cell membrane. The catalysed reaction is 2 hydrogencarbonate(out) + Na(+)(out) = 2 hydrogencarbonate(in) + Na(+)(in). It catalyses the reaction 3 hydrogencarbonate(out) + Na(+)(out) = 3 hydrogencarbonate(in) + Na(+)(in). Its activity is regulated as follows. Activated by cyclic AMP. Electrogenic sodium/bicarbonate cotransporter with a Na(+):HCO3(-) stoichiometry varying from 1:2 to 1:3. May regulate bicarbonate influx/efflux at the basolateral membrane of cells and regulate intracellular pH. The polypeptide is Electrogenic sodium bicarbonate cotransporter 1 (Slc4a4) (Mus musculus (Mouse)).